Consider the following 332-residue polypeptide: 2,3-diketo-L-gulonate reductase (332 aa).

Catalysis depends on H44, which acts as the Proton donor. Residues 168–174 (ITMVDMS), 224–225 (WK), and 304–306 (GHE) each bind NAD(+).

It belongs to the LDH2/MDH2 oxidoreductase family. DlgD subfamily. As to quaternary structure, homodimer.

It is found in the cytoplasm. The catalysed reaction is 3-dehydro-L-gulonate + NAD(+) = 2,3-dioxo-L-gulonate + NADH + H(+). It carries out the reaction 3-dehydro-L-gulonate + NADP(+) = 2,3-dioxo-L-gulonate + NADPH + H(+). Functionally, catalyzes the reduction of 2,3-diketo-L-gulonate in the presence of NADH, to form 3-keto-L-gulonate. The protein is 2,3-diketo-L-gulonate reductase of Pasteurella multocida (strain Pm70).